Reading from the N-terminus, the 162-residue chain is MIKAVCPGSFDPVTLGHLDIIERAARTFDEVVVAVLTNPRKEPLFTVEERLEMLREATKHIPNVSVAAADGLLVDFARQQGCRVIVKGLRPIQDFEYEWQMGAVNRQLDGNIETCFLMSRIEYAHLSSSIVRELAYFGRPTEGLVPPFTARRLREKFAKTQP.

Position 9 (serine 9) interacts with substrate. Residues 9–10 (SF) and histidine 17 each bind ATP. Substrate-binding residues include lysine 41, leucine 73, and lysine 87. ATP-binding positions include 88-90 (GLR), glutamate 98, and 123-129 (YAHLSSS).

It belongs to the bacterial CoaD family. Homohexamer. Mg(2+) serves as cofactor.

It localises to the cytoplasm. It catalyses the reaction (R)-4'-phosphopantetheine + ATP + H(+) = 3'-dephospho-CoA + diphosphate. It participates in cofactor biosynthesis; coenzyme A biosynthesis; CoA from (R)-pantothenate: step 4/5. Reversibly transfers an adenylyl group from ATP to 4'-phosphopantetheine, yielding dephospho-CoA (dPCoA) and pyrophosphate. The polypeptide is Phosphopantetheine adenylyltransferase (Symbiobacterium thermophilum (strain DSM 24528 / JCM 14929 / IAM 14863 / T)).